A 299-amino-acid polypeptide reads, in one-letter code: RING-H2 finger protein ATL20 (299 aa).

The helical transmembrane segment at 172–192 (LIITLCIIGGITATCIAAIRI) threads the bilayer. Residues 253–295 (CPICLSEYASKETVRCMPECDHCFHVQCIDEWLKIHSSCPVCR) form an RING-type; atypical zinc finger.

This sequence belongs to the RING-type zinc finger family. ATL subfamily.

The protein localises to the membrane. It catalyses the reaction S-ubiquitinyl-[E2 ubiquitin-conjugating enzyme]-L-cysteine + [acceptor protein]-L-lysine = [E2 ubiquitin-conjugating enzyme]-L-cysteine + N(6)-ubiquitinyl-[acceptor protein]-L-lysine.. It functions in the pathway protein modification; protein ubiquitination. The chain is RING-H2 finger protein ATL20 (ATL20) from Arabidopsis thaliana (Mouse-ear cress).